Here is a 93-residue protein sequence, read N- to C-terminus: Photosystem I iron-sulfur center (93 aa).

4Fe-4S ferredoxin-type domains are found at residues 13 to 43 (KDHEIRIYSTCIGCTQCVRACPTDVLEMVPS) and 50 to 80 (QVVTVPRIEDCVGCKRCESACPTDFLSIRVY). Residues cysteine 23, cysteine 26, cysteine 29, cysteine 33, cysteine 60, cysteine 63, cysteine 66, and cysteine 70 each coordinate [4Fe-4S] cluster.

The eukaryotic PSI reaction center is composed of at least 11 subunits. [4Fe-4S] cluster is required as a cofactor.

It localises to the plastid. Its subcellular location is the chloroplast thylakoid membrane. It carries out the reaction reduced [plastocyanin] + hnu + oxidized [2Fe-2S]-[ferredoxin] = oxidized [plastocyanin] + reduced [2Fe-2S]-[ferredoxin]. Functionally, apoprotein for the two 4Fe-4S centers FA and FB of photosystem I (PSI); essential for photochemical activity. FB is the terminal electron acceptor of PSI, donating electrons to ferredoxin. The C-terminus interacts with PsaA/B/D and helps assemble the protein into the PSI complex. Required for binding of PsaD and PsaE to PSI. PSI is a plastocyanin-ferredoxin oxidoreductase, converting photonic excitation into a charge separation, which transfers an electron from the donor P700 chlorophyll pair to the spectroscopically characterized acceptors A0, A1, FX, FA and FB in turn. This chain is Photosystem I iron-sulfur center, found in Bigelowiella natans (Pedinomonas minutissima).